The primary structure comprises 209 residues: Thiamine-phosphate synthase (209 aa).

4-amino-2-methyl-5-(diphosphooxymethyl)pyrimidine is bound by residues 41 to 45 (QLREK) and N73. Mg(2+) is bound by residues D74 and D93. S112 is a binding site for 4-amino-2-methyl-5-(diphosphooxymethyl)pyrimidine. 138–140 (TGT) contributes to the 2-[(2R,5Z)-2-carboxy-4-methylthiazol-5(2H)-ylidene]ethyl phosphate binding site. Residue K141 participates in 4-amino-2-methyl-5-(diphosphooxymethyl)pyrimidine binding. 2-[(2R,5Z)-2-carboxy-4-methylthiazol-5(2H)-ylidene]ethyl phosphate contacts are provided by residues G168 and 188-189 (VS).

The protein belongs to the thiamine-phosphate synthase family. Mg(2+) serves as cofactor.

It catalyses the reaction 2-[(2R,5Z)-2-carboxy-4-methylthiazol-5(2H)-ylidene]ethyl phosphate + 4-amino-2-methyl-5-(diphosphooxymethyl)pyrimidine + 2 H(+) = thiamine phosphate + CO2 + diphosphate. The enzyme catalyses 2-(2-carboxy-4-methylthiazol-5-yl)ethyl phosphate + 4-amino-2-methyl-5-(diphosphooxymethyl)pyrimidine + 2 H(+) = thiamine phosphate + CO2 + diphosphate. It carries out the reaction 4-methyl-5-(2-phosphooxyethyl)-thiazole + 4-amino-2-methyl-5-(diphosphooxymethyl)pyrimidine + H(+) = thiamine phosphate + diphosphate. It participates in cofactor biosynthesis; thiamine diphosphate biosynthesis; thiamine phosphate from 4-amino-2-methyl-5-diphosphomethylpyrimidine and 4-methyl-5-(2-phosphoethyl)-thiazole: step 1/1. Functionally, condenses 4-methyl-5-(beta-hydroxyethyl)thiazole monophosphate (THZ-P) and 2-methyl-4-amino-5-hydroxymethyl pyrimidine pyrophosphate (HMP-PP) to form thiamine monophosphate (TMP). The polypeptide is Thiamine-phosphate synthase (Alkaliphilus oremlandii (strain OhILAs) (Clostridium oremlandii (strain OhILAs))).